Reading from the N-terminus, the 288-residue chain is Probable ketoamine kinase VV1_2562 (288 aa).

An ATP-binding site is contributed by 92-94; sequence NFL. D195 serves as the catalytic Proton acceptor.

Belongs to the fructosamine kinase family.

Functionally, ketoamine kinase that phosphorylates ketoamines on the third carbon of the sugar moiety to generate ketoamine 3-phosphate. This is Probable ketoamine kinase VV1_2562 from Vibrio vulnificus (strain CMCP6).